The primary structure comprises 374 residues: MLRLSGVKSAVRARAAAGAAFSVSLSGPQAVSLLALPLVRHATKRAGGGKTNLKDSIGRRLGVKATEGTYVQPSDIIYRQRGTKFYPGENTWIGRDHTIYAKEPGYVRFYYDPFHPTRRFVGVGLTPEARLPTDHMAPRARRFGRNVISDPKRAEAELAWRPNKEQQLLEEISERRAVKQAEEQALTDKLAAKLKELGFDNSELAARAQKMAHYRTLGWTNAEAARFADAFLNTSSDVKDFDAKFEVTKFGTVVPKSSPETVEKELNETRDKLTKVRQPNAFISLSQIAKIDKILDATVYLSQSQKEQLADEFKVTASLLEAVQPHEEVVKAAKKGKGKLVKVYNVQRKGIDYVLAPKDAHFSEDIAFQKEFVH.

The N-terminal 41 residues, 1–41 (MLRLSGVKSAVRARAAAGAAFSVSLSGPQAVSLLALPLVRH), are a transit peptide targeting the mitochondrion.

It belongs to the bacterial ribosomal protein bL27 family.

The protein resides in the mitochondrion. Its function is as follows. Component of the large subunit of mitochondrial ribosome. The polypeptide is Large ribosomal subunit protein bL27m (MRPL2) (Yarrowia lipolytica (strain CLIB 122 / E 150) (Yeast)).